A 2111-amino-acid chain; its full sequence is Fatty acid synthase beta subunit aflB (2111 aa).

Residues 200-565 are acetyltransferase (AT) domain; the sequence is IVTVFNGQGV…KAGTAARVIL (366 aa). Residues 618–863 form an enoyl reductase (ER) domain region; the sequence is SRALGLPPVM…AIVDTPGVPD (246 aa). The tract at residues 1195–1688 is dehydratase (DH) domain; it reads GTKPSWRKAL…SPGETLLVDI (494 aa). The 103-residue stretch at 1606–1708 folds into the MaoC-like domain; sequence EMPTSSDQYA…IVVATARSES (103 aa). Residues 1727–2091 are malonyl/palmitoyl transferase (MT/PT) domain; that stretch reads YLFTGQGSQK…FENVLAISES (365 aa).

Belongs to the fungal fatty acid synthetase subunit beta family. [Alpha(6)beta(6)] hexamers of two multifunctional subunits (alpha and beta).

The enzyme catalyses acetyl-CoA + n malonyl-CoA + 2n NADPH + 4n H(+) = a long-chain-acyl-CoA + n CoA + n CO2 + 2n NADP(+).. The catalysed reaction is holo-[ACP] + acetyl-CoA = acetyl-[ACP] + CoA. It carries out the reaction holo-[ACP] + malonyl-CoA = malonyl-[ACP] + CoA. It catalyses the reaction a (3R)-hydroxyacyl-[ACP] = a (2E)-enoyl-[ACP] + H2O. The enzyme catalyses a 2,3-saturated acyl-[ACP] + NAD(+) = a (2E)-enoyl-[ACP] + NADH + H(+). The catalysed reaction is (9Z)-octadecenoyl-[ACP] + H2O = (9Z)-octadecenoate + holo-[ACP] + H(+). It functions in the pathway secondary metabolite biosynthesis. Functionally, fatty acid synthase beta subunit; part of the gene cluster that mediates the biosynthesis of aspercryptins, linear lipopeptides built from six amino acids including 2 highly unusual and nonproteogenic amino acids, 2-amino-octanoic acid (2aoa) and 2-amino-dodecanol (2adol). The core structure of aspercryptins is as follows: Ser/Ala-Thr-Ile/Val-2aoa-Asn-2adol. The first step of aspercryptin biosynthesis is the generation of the fatty acid precursors, octanoic and dodecanoic acids, by the FAS subunits atnF and atnM. The fatty acid precursors are likely transformed into the corresponding alpha-amino fatty acids in three steps. First, they are hydroxylated by the cytochrome P450 monooxygenase atnE, then oxidized to the corresponding alpha-keto acids by the NAD(P)-dependent oxidoreductase atnD, and finally converted to the alpha-amino fatty acids by the PLP-dependent aminotransferases atnH or atnJ. the alpha-amino fatty acids, 2-amino-octanoic and 2-amino-dodecanoic acids, are recognized, activated, and covalently tethered to the NRPS atnA by its fourth and sixth adenylation domains. The second module of atnA is the Thr module and contains an epimerase (E) domain responsible for the epimerization of Thr to D-allo-Thr. Additionally, despite atnA having only one epimerase domain, the first amino acid of aspercryptin A1 is D-Ser, suggesting that serine is either loaded directly as D-Ser on the first module or that the epimerase domain in the threonine module epimerizes both L-Ser and L-Thr. After condensation of the hexapeptide of aspercryptin, the C-terminal reductase (TE) domain might be involved in the reductive release and production of the aldehyde hexapeptide. Further reduction would generate aspercryptins. The variety of aspercryptins produced reflects the flexibility of the atnA NRPS, allowing incorporation of alanine instead of serine, valine for isoleucine, and a C10 fatty amino alcohol instead of the C12 version. AtnB seems to be involved in the selectivity for Ile versus Val by the third module. Moreover, type B, C and D aspercryptins have an additional N-terminal cichorine, acetyl and propionyl group respectively. This is Fatty acid synthase beta subunit aflB from Emericella nidulans (strain FGSC A4 / ATCC 38163 / CBS 112.46 / NRRL 194 / M139) (Aspergillus nidulans).